Reading from the N-terminus, the 593-residue chain is Transcription factor ATEG_07667 (593 aa).

A DNA-binding region (zn(2)-C6 fungal-type) is located at residues Cys-18 to Cys-47.

The protein localises to the nucleus. Functionally, transcriptional regulator that regulates both the azasperpyranone A biosynthesis clusters A and B. Specifically up-regulates the expression of the cluster A and B specific transcription factors ATEG_03638 and ATEG_07666, which in turn activate the expression of their respective clusters. The chain is Transcription factor ATEG_07667 from Aspergillus terreus (strain NIH 2624 / FGSC A1156).